Consider the following 259-residue polypeptide: Autophagy-related protein 27 (259 aa).

An N-terminal signal peptide occupies residues 1–15; it reads MWFPILTWLVATAVA. Residues 16–167 enclose the MRH domain; sequence LDCSAKDLDS…QVKSKAACVT (152 aa). Topologically, residues 16–184 are lumenal; that stretch reads LDCSAKDLDS…PKKPEDNGES (169 aa). 3 disulfide bridges follow: Cys-18–Cys-57, Cys-68–Cys-75, and Cys-135–Cys-165. The chain crosses the membrane as a helical span at residues 185–205; the sequence is WGWFTWIFIFMVLFLSIYIIG. Over 206–259 the chain is Cytoplasmic; sequence GAWFQYNKGNAIDFQSALREVLENFVDLVRGLPSFIREIIEKVTGSNRGEYSAV.

This sequence belongs to the ATG27 family.

Its subcellular location is the cytoplasmic vesicle membrane. The protein localises to the golgi apparatus membrane. It is found in the mitochondrion membrane. It localises to the preautophagosomal structure membrane. Functionally, effector of VPS34 phosphatidylinositol 3-phosphate kinase signaling. Regulates the cytoplasm to vacuole transport (Cvt) vesicle formation. Plays a role in ATG protein retrieval from the pre-autophagosomal structure (PAS) and is especially required for autophagy-dependent cycling of ATG9. In Meyerozyma guilliermondii (strain ATCC 6260 / CBS 566 / DSM 6381 / JCM 1539 / NBRC 10279 / NRRL Y-324) (Yeast), this protein is Autophagy-related protein 27 (ATG27).